The following is a 551-amino-acid chain: Formate--tetrahydrofolate ligase (551 aa).

61–68 (TPAGEGKS) serves as a coordination point for ATP.

Belongs to the formate--tetrahydrofolate ligase family.

The catalysed reaction is (6S)-5,6,7,8-tetrahydrofolate + formate + ATP = (6R)-10-formyltetrahydrofolate + ADP + phosphate. It participates in one-carbon metabolism; tetrahydrofolate interconversion. The sequence is that of Formate--tetrahydrofolate ligase from Lactiplantibacillus plantarum (strain ATCC BAA-793 / NCIMB 8826 / WCFS1) (Lactobacillus plantarum).